We begin with the raw amino-acid sequence, 71 residues long: ATP synthase F(0) complex subunit e, mitochondrial (71 aa).

N6-acetyllysine is present on Lys34.

This sequence belongs to the ATPase e subunit family. As to quaternary structure, component of the ATP synthase complex composed at least of ATP5F1A/subunit alpha, ATP5F1B/subunit beta, ATP5MC1/subunit c (homooctomer), MT-ATP6/subunit a, MT-ATP8/subunit 8, ATP5ME/subunit e, ATP5MF/subunit f, ATP5MG/subunit g, ATP5MK/subunit k, ATP5MJ/subunit j, ATP5F1C/subunit gamma, ATP5F1D/subunit delta, ATP5F1E/subunit epsilon, ATP5PF/subunit F6, ATP5PB/subunit b, ATP5PD/subunit d, ATP5PO/subunit OSCP. ATP synthase complex consists of a soluble F(1) head domain (subunits alpha(3) and beta(3)) - the catalytic core - and a membrane F(0) domain - the membrane proton channel (subunits c, a, 8, e, f, g, k and j). These two domains are linked by a central stalk (subunits gamma, delta, and epsilon) rotating inside the F1 region and a stationary peripheral stalk (subunits F6, b, d, and OSCP).

The protein resides in the mitochondrion. It is found in the mitochondrion inner membrane. Its function is as follows. Subunit e, of the mitochondrial membrane ATP synthase complex (F(1)F(0) ATP synthase or Complex V) that produces ATP from ADP in the presence of a proton gradient across the membrane which is generated by electron transport complexes of the respiratory chain. ATP synthase complex consist of a soluble F(1) head domain - the catalytic core - and a membrane F(1) domain - the membrane proton channel. These two domains are linked by a central stalk rotating inside the F(1) region and a stationary peripheral stalk. During catalysis, ATP synthesis in the catalytic domain of F(1) is coupled via a rotary mechanism of the central stalk subunits to proton translocation. In vivo, can only synthesize ATP although its ATP hydrolase activity can be activated artificially in vitro. Part of the complex F(0) domain. In Bos taurus (Bovine), this protein is ATP synthase F(0) complex subunit e, mitochondrial.